The primary structure comprises 101 residues: Small ribosomal subunit protein uS14 (101 aa).

This sequence belongs to the universal ribosomal protein uS14 family. In terms of assembly, part of the 30S ribosomal subunit. Contacts proteins S3 and S10.

Its function is as follows. Binds 16S rRNA, required for the assembly of 30S particles and may also be responsible for determining the conformation of the 16S rRNA at the A site. The chain is Small ribosomal subunit protein uS14 from Anaplasma phagocytophilum (strain HZ).